A 557-amino-acid chain; its full sequence is Dihydroxy-acid dehydratase (557 aa).

Residue aspartate 78 participates in Mg(2+) binding. Residue cysteine 119 participates in [2Fe-2S] cluster binding. 2 residues coordinate Mg(2+): aspartate 120 and lysine 121. Position 121 is an N6-carboxylysine (lysine 121). Cysteine 192 lines the [2Fe-2S] cluster pocket. Position 442 (glutamate 442) interacts with Mg(2+). The active-site Proton acceptor is serine 468.

It belongs to the IlvD/Edd family. Homodimer. It depends on [2Fe-2S] cluster as a cofactor. Mg(2+) serves as cofactor.

It catalyses the reaction (2R)-2,3-dihydroxy-3-methylbutanoate = 3-methyl-2-oxobutanoate + H2O. It carries out the reaction (2R,3R)-2,3-dihydroxy-3-methylpentanoate = (S)-3-methyl-2-oxopentanoate + H2O. Its pathway is amino-acid biosynthesis; L-isoleucine biosynthesis; L-isoleucine from 2-oxobutanoate: step 3/4. The protein operates within amino-acid biosynthesis; L-valine biosynthesis; L-valine from pyruvate: step 3/4. Its function is as follows. Functions in the biosynthesis of branched-chain amino acids. Catalyzes the dehydration of (2R,3R)-2,3-dihydroxy-3-methylpentanoate (2,3-dihydroxy-3-methylvalerate) into 2-oxo-3-methylpentanoate (2-oxo-3-methylvalerate) and of (2R)-2,3-dihydroxy-3-methylbutanoate (2,3-dihydroxyisovalerate) into 2-oxo-3-methylbutanoate (2-oxoisovalerate), the penultimate precursor to L-isoleucine and L-valine, respectively. In Bacillus cereus (strain ZK / E33L), this protein is Dihydroxy-acid dehydratase.